The primary structure comprises 320 residues: Cytochrome f (320 aa).

Positions methionine 1–alanine 35 are cleaved as a signal peptide. Heme is bound by residues tyrosine 36, cysteine 56, cysteine 59, and histidine 60. Residues valine 286–lysine 306 traverse the membrane as a helical segment.

This sequence belongs to the cytochrome f family. The 4 large subunits of the cytochrome b6-f complex are cytochrome b6, subunit IV (17 kDa polypeptide, petD), cytochrome f and the Rieske protein, while the 4 small subunits are PetG, PetL, PetM and PetN. The complex functions as a dimer. The cofactor is heme.

The protein resides in the plastid. It localises to the chloroplast thylakoid membrane. Its function is as follows. Component of the cytochrome b6-f complex, which mediates electron transfer between photosystem II (PSII) and photosystem I (PSI), cyclic electron flow around PSI, and state transitions. This is Cytochrome f from Buxus microphylla (Littleleaf boxwood).